A 222-amino-acid chain; its full sequence is Sugar fermentation stimulation protein homolog (222 aa).

This sequence belongs to the SfsA family.

In Thermotoga petrophila (strain ATCC BAA-488 / DSM 13995 / JCM 10881 / RKU-1), this protein is Sugar fermentation stimulation protein homolog.